An 82-amino-acid polypeptide reads, in one-letter code: Delta-actitoxin-Aeq2a (82 aa).

An N-terminal signal peptide occupies residues 1 to 19; sequence MNRLMILVFAAVFLALASA. A propeptide spanning residues 20 to 26 is cleaved from the precursor; it reads DEDVDIA. 3 cysteine pairs are disulfide-bonded: C32–C79, C34–C69, and C62–C80.

It belongs to the sea anemone sodium channel inhibitory toxin family. Type I subfamily.

It localises to the secreted. The protein localises to the nematocyst. Binds specifically to voltage-gated sodium channels (Nav), thereby delaying their inactivation during signal transduction. Causes death to crabs (minimum lethal dose of 25 ug/kg) and mice. The polypeptide is Delta-actitoxin-Aeq2a (Actinia equina (Beadlet anemone)).